The following is an 818-amino-acid chain: Serine/threonine-protein phosphatase 4 regulatory subunit 3 (818 aa).

A WH1 domain is found at 1–100 (MTDTRRRVKV…DEIWEKICQV (100 aa)). Residues 718-818 (LAKSSFSGRQ…PPSKKSRLSS (101 aa)) are disordered. A compositionally biased stretch (polar residues) spans 721–730 (SSFSGRQNPS). A compositionally biased stretch (low complexity) spans 736–756 (SGSTKTSLSSPPPSASLSPGS). A compositionally biased stretch (acidic residues) spans 788–804 (YPDDDEEEEDDDDEESK).

It belongs to the SMEK family. As to quaternary structure, serine/threonine-protein phosphatase 4 (PP4) occurs in different assemblies of the catalytic and one or more regulatory subunits.

In terms of biological role, regulatory subunit of serine/threonine-protein phosphatase 4. The polypeptide is Serine/threonine-protein phosphatase 4 regulatory subunit 3 (smek1) (Tetraodon nigroviridis (Spotted green pufferfish)).